The sequence spans 129 residues: Phosphoribosyl-AMP cyclohydrolase (129 aa).

Residue Asp77 participates in Mg(2+) binding. Cys78 is a Zn(2+) binding site. Mg(2+) contacts are provided by Asp79 and Asp81. Positions 94 and 101 each coordinate Zn(2+).

Belongs to the PRA-CH family. As to quaternary structure, homodimer. Requires Mg(2+) as cofactor. The cofactor is Zn(2+).

The protein resides in the cytoplasm. It catalyses the reaction 1-(5-phospho-beta-D-ribosyl)-5'-AMP + H2O = 1-(5-phospho-beta-D-ribosyl)-5-[(5-phospho-beta-D-ribosylamino)methylideneamino]imidazole-4-carboxamide. It participates in amino-acid biosynthesis; L-histidine biosynthesis; L-histidine from 5-phospho-alpha-D-ribose 1-diphosphate: step 3/9. Its function is as follows. Catalyzes the hydrolysis of the adenine ring of phosphoribosyl-AMP. In Pelotomaculum thermopropionicum (strain DSM 13744 / JCM 10971 / SI), this protein is Phosphoribosyl-AMP cyclohydrolase.